We begin with the raw amino-acid sequence, 1196 residues long: Cingulin (1196 aa).

The segment at 7-354 is head; that stretch reads MAEPRGPVDH…LVMTSGSAKG (348 aa). Residues 48 to 62 carry the ZIM motif; sequence ANTYGVAVRVQGIAG. Residues 54-67 form an interaction with TJP1/ZO1 region; the sequence is AVRVQGIAGQPFVV. Residues 82 to 105 form a disordered region; sequence IKGTNNRGPPGALSSDSELPESTY. 9 positions are modified to phosphoserine: Ser-95, Ser-96, Ser-98, Ser-135, Ser-137, Ser-140, Ser-155, Ser-165, and Ser-214. The span at 95 to 105 shows a compositional bias: polar residues; sequence SSDSELPESTY. The segment at 183 to 263 is disordered; that stretch reads NKFDSRQGGQ…NQGPLGGFSC (81 aa). The segment covering 218–231 has biased composition (basic and acidic residues); sequence RLPRDTLDEREHQF. Over residues 245–256 the composition is skewed to polar residues; it reads MGNSKQSSQNQG. Position 274 is a phosphoserine (Ser-274). Residues 355–1150 adopt a coiled-coil conformation; sequence LTGQSELSQK…ARIKTLEKDS (796 aa). Lys-576 carries the post-translational modification N6-acetyllysine. Basic and acidic residues predominate over residues 884 to 897; that stretch reads AQRQAKEWATEAEK. Disordered stretches follow at residues 884–906, 1023–1061, and 1149–1174; these read AQRQ…SRLQ, DLKS…EERE, and DSWR…EEFD. The segment covering 1038-1050 has biased composition (low complexity); it reads SASLSQLESQNQE. Residues 1051–1061 are compositionally biased toward basic and acidic residues; that stretch reads LQERLQAEERE. Residues 1155–1196 are tail; sequence SRSAAESAQREGLSSDEEFDSVYDPSSIASLLTESNLQTSSC. Phosphoserine occurs at positions 1168, 1169, and 1175.

This sequence belongs to the cingulin family. As to quaternary structure, homodimer. Interacts with TJP1/ZO1 and SPEF1.

Its subcellular location is the cell junction. It localises to the tight junction. In terms of biological role, probably plays a role in the formation and regulation of the tight junction (TJ) paracellular permeability barrier. The sequence is that of Cingulin from Canis lupus familiaris (Dog).